The sequence spans 187 residues: Putative carbonic anhydrase YtiB (187 aa).

Zn(2+) is bound by residues Cys38, Asp40, His96, and Cys99.

The protein belongs to the beta-class carbonic anhydrase family. Zn(2+) serves as cofactor.

It catalyses the reaction hydrogencarbonate + H(+) = CO2 + H2O. Reversible hydration of carbon dioxide. The protein is Putative carbonic anhydrase YtiB (ytiB) of Bacillus subtilis (strain 168).